The chain runs to 115 residues: Salivary protein gSG6 (115 aa).

The N-terminal stretch at 1-28 (MAIRVELLLAMVLLPLLLLESVVPHAAA) is a signal peptide.

Female saliva (at protein level). Distal-lateral lobes of female salivary gland (at protein level). Not detected in male salivary gland (at protein level).

It localises to the secreted. Functionally, required for efficient probing and blood feeding. This is Salivary protein gSG6 from Anopheles gambiae (African malaria mosquito).